Reading from the N-terminus, the 228-residue chain is MNNSTPVLQAKKLVKAYEEGDNELEVLRGVELTVNKGDILAIIGASGSGKSTLLNLLGGLDHATRGSVAIAGTSVASLNDRETGRLRNRYLGFVYQFHHLLPEFTALENVAMPLLIRGDKPSDCQARSAEILERVGLGPRLKHKPSALSGGERQRVAIARALVTEPALVMADEPTGNLDERTAAQVQALMIELNEKLGTAFMIVTHDREFAARCPQQYELHDGLLRRL.

The ABC transporter domain maps to 8 to 228; sequence LQAKKLVKAY…ELHDGLLRRL (221 aa). 44–51 is a binding site for ATP; that stretch reads GASGSGKS.

This sequence belongs to the ABC transporter superfamily. Lipoprotein translocase (TC 3.A.1.125) family. As to quaternary structure, the complex is composed of two ATP-binding proteins (LolD) and two transmembrane proteins (LolC and LolE).

It is found in the cell inner membrane. Functionally, part of the ABC transporter complex LolCDE involved in the translocation of mature outer membrane-directed lipoproteins, from the inner membrane to the periplasmic chaperone, LolA. Responsible for the formation of the LolA-lipoprotein complex in an ATP-dependent manner. This is Lipoprotein-releasing system ATP-binding protein LolD from Alcanivorax borkumensis (strain ATCC 700651 / DSM 11573 / NCIMB 13689 / SK2).